The sequence spans 209 residues: Small ribosomal subunit protein uS4 (209 aa).

Residues 99-179 (GRLDSVAYRM…FPEWIEVDAK (81 aa)) form the S4 RNA-binding domain.

It belongs to the universal ribosomal protein uS4 family. In terms of assembly, part of the 30S ribosomal subunit. Contacts protein S5. The interaction surface between S4 and S5 is involved in control of translational fidelity.

Functionally, one of the primary rRNA binding proteins, it binds directly to 16S rRNA where it nucleates assembly of the body of the 30S subunit. Its function is as follows. With S5 and S12 plays an important role in translational accuracy. This is Small ribosomal subunit protein uS4 from Azoarcus sp. (strain BH72).